The following is a 232-amino-acid chain: Lipoprotein-releasing system ATP-binding protein LolD (232 aa).

An ABC transporter domain is found at 11-231 (VYLHDIRRQY…SLENGHVVEL (221 aa)). 47–54 (APSGSGKS) contacts ATP.

It belongs to the ABC transporter superfamily. Lipoprotein translocase (TC 3.A.1.125) family. As to quaternary structure, the complex is composed of two ATP-binding proteins (LolD) and two transmembrane proteins (LolC and LolE).

The protein resides in the cell inner membrane. Its function is as follows. Part of the ABC transporter complex LolCDE involved in the translocation of mature outer membrane-directed lipoproteins, from the inner membrane to the periplasmic chaperone, LolA. Responsible for the formation of the LolA-lipoprotein complex in an ATP-dependent manner. The polypeptide is Lipoprotein-releasing system ATP-binding protein LolD (Nitrobacter hamburgensis (strain DSM 10229 / NCIMB 13809 / X14)).